Here is a 677-residue protein sequence, read N- to C-terminus: Multicopper oxidase GIP1 (677 aa).

A signal peptide spans 1–23; the sequence is MLTSPRLILLLLAWVFSALVASA. Plastocyanin-like domains follow at residues 31–150 and 179–379; these read ITWE…IRRK and LVMV…RYKG. Residue Asn76 is glycosylated (N-linked (GlcNAc...) asparagine). His80, His82, His130, and His132 together coordinate Cu cation. Asn228, Asn283, Asn396, and Asn478 each carry an N-linked (GlcNAc...) asparagine glycan. The region spanning 469-588 is the Plastocyanin-like 3 domain; that stretch reads DEGLVIRTKN…AGGMAIAILD (120 aa). A Cu cation-binding site is contributed by His503. N-linked (GlcNAc...) asparagine glycosylation occurs at Asn520. The tract at residues 629–651 is disordered; it reads PLLAVSPSGGPKKDSGETSASDS.

This sequence belongs to the multicopper oxidase family. As to quaternary structure, might be part of an extracellular enzyme complex composed of GIP1, aurF, aurO and aurS.

The protein resides in the secreted. It localises to the extracellular space. The protein operates within pigment biosynthesis. In terms of biological role, multicopper oxidase; part of the gene cluster that mediates the biosynthesis of aurofusarin, a red mycelium pigment which is acting as a mycotoxin. The first step is performed by the polyketide synthase which condenses one acetyl-CoA and 6 malonyl-CoA units to form the first intermediate, the cyclic heptaketide and yellow pigment YWA1. The C2 hydroxyl group in the pyrone ring of YWA1 is probably formed during ring closure by an aldol-type cyclization reaction. The dehydratase aurZ then acts as the first tailoring enzyme in the aurofusarin biosynthetic pathway by converting YWA1 to nor-rubrofusarin. Nor-rubrofusarin is then methylated to rubrofusarin by the O-methyltransferase aurJ. Rubrofusarin is then transported across the plasma membrane by the rubrofusarin-specific pump aurT for further enzymatic processing by the extracellular complex composed of GIP1, aurF, aurO and aurS to yield aurofusarin. The protein is Multicopper oxidase GIP1 of Gibberella zeae (strain ATCC MYA-4620 / CBS 123657 / FGSC 9075 / NRRL 31084 / PH-1) (Wheat head blight fungus).